The following is a 325-amino-acid chain: Basic membrane protein A (325 aa).

An N-terminal signal peptide occupies residues 1–3 (FLS). C4 is lipidated: N-palmitoyl cysteine. C4 carries the S-diacylglycerol cysteine lipid modification.

The protein belongs to the BMP lipoprotein family. In terms of assembly, monomer.

It localises to the cell inner membrane. Its function is as follows. Immunogenic protein. May be part of an ABC-type nucleoside uptake system involved in the purine salvage pathway. This is Basic membrane protein A (bmpA) from Borreliella afzelii (Borrelia afzelii).